A 530-amino-acid polypeptide reads, in one-letter code: Ubiquitin carboxyl-terminal hydrolase 17-like protein 22 (530 aa).

Residues 80–375 enclose the USP domain; it reads AGLQNMGNTC…QAYVLFYIQK (296 aa). Cys-89 acts as the Nucleophile in catalysis. His-334 (proton acceptor) is an active-site residue. Composition is skewed to basic and acidic residues over residues 382–392 and 398–412; these read SESVSRGREPR and DTDR…KRDH. Disordered regions lie at residues 382-412 and 476-530; these read SESV…KRDH and KNHH…LVCQ. The span at 484–495 shows a compositional bias: low complexity; the sequence is SSLLKLSSTTPT. Polar residues predominate over residues 496–505; the sequence is HQESMNTGTL. The span at 510–524 shows a compositional bias: basic residues; it reads GRARRSKGKNKHSKR.

This sequence belongs to the peptidase C19 family. USP17 subfamily.

Its subcellular location is the nucleus. The protein resides in the endoplasmic reticulum. The enzyme catalyses Thiol-dependent hydrolysis of ester, thioester, amide, peptide and isopeptide bonds formed by the C-terminal Gly of ubiquitin (a 76-residue protein attached to proteins as an intracellular targeting signal).. Functionally, deubiquitinating enzyme that removes conjugated ubiquitin from specific proteins to regulate different cellular processes that may include cell proliferation, progression through the cell cycle, apoptosis, cell migration, and the cellular response to viral infection. This is Ubiquitin carboxyl-terminal hydrolase 17-like protein 22 (USP17L22) from Homo sapiens (Human).